A 151-amino-acid chain; its full sequence is MGTIRLMHAKLHRVQVTEANIDYVGSITIDPILLDKVGILPLEEVDIVNLNNGNRFSTYVIPGETGKGEICPNGGAALLCQPGDLLIIYAYENCDRQEVIQRGHTARVIVADEDNKIQDFLIQTLVPCEDGNKVEFHNSSMIDTILESSQT.

Serine 26 (schiff-base intermediate with substrate; via pyruvic acid) is an active-site residue. Serine 26 is modified (pyruvic acid (Ser)). Residue threonine 58 participates in substrate binding. The active-site Proton donor is tyrosine 59. A substrate-binding site is contributed by 74–76 (GGA).

It belongs to the PanD family. In terms of assembly, heterooctamer of four alpha and four beta subunits. Pyruvate is required as a cofactor. Is synthesized initially as an inactive proenzyme, which is activated by self-cleavage at a specific serine bond to produce a beta-subunit with a hydroxyl group at its C-terminus and an alpha-subunit with a pyruvoyl group at its N-terminus.

The protein resides in the cytoplasm. The catalysed reaction is L-aspartate + H(+) = beta-alanine + CO2. The protein operates within cofactor biosynthesis; (R)-pantothenate biosynthesis; beta-alanine from L-aspartate: step 1/1. In terms of biological role, catalyzes the pyruvoyl-dependent decarboxylation of aspartate to produce beta-alanine. This is Aspartate 1-decarboxylase from Crocosphaera subtropica (strain ATCC 51142 / BH68) (Cyanothece sp. (strain ATCC 51142)).